A 370-amino-acid polypeptide reads, in one-letter code: Homoserine kinase (370 aa).

A chloroplast-targeting transit peptide spans 1 to 34; it reads MASLCFQSPSKPISYFQPKSNPSPPLFAKVSVFR. 143-154 is a binding site for ATP; sequence LPLGSGLGSSAA.

Belongs to the GHMP kinase family. Homoserine kinase subfamily.

The protein localises to the plastid. Its subcellular location is the chloroplast stroma. The catalysed reaction is L-homoserine + ATP = O-phospho-L-homoserine + ADP + H(+). The protein operates within amino-acid biosynthesis; L-threonine biosynthesis; L-threonine from L-aspartate: step 4/5. Its function is as follows. Catalyzes the ATP-dependent phosphorylation of L-homoserine to L-homoserine phosphate. Is specific for L-homoserine and cannot use other substrates such D-serine, L-serine, D-threonine and L-threonine, galactose or D-homoserine in vitro. Required for susceptibility to the downy mildew pathogen Hyaloperonospora parasitica. The protein is Homoserine kinase (HSK) of Arabidopsis thaliana (Mouse-ear cress).